Reading from the N-terminus, the 94-residue chain is CRISPR-associated endoribonuclease Cas2 (94 aa).

D11 is a Mg(2+) binding site.

The protein belongs to the CRISPR-associated endoribonuclease Cas2 protein family. In terms of assembly, homodimer, forms a heterotetramer with a Cas1 homodimer. Mg(2+) serves as cofactor.

Functionally, CRISPR (clustered regularly interspaced short palindromic repeat), is an adaptive immune system that provides protection against mobile genetic elements (viruses, transposable elements and conjugative plasmids). CRISPR clusters contain sequences complementary to antecedent mobile elements and target invading nucleic acids. CRISPR clusters are transcribed and processed into CRISPR RNA (crRNA). Functions as a ssRNA-specific endoribonuclease. Involved in the integration of spacer DNA into the CRISPR cassette. In Allochromatium vinosum (strain ATCC 17899 / DSM 180 / NBRC 103801 / NCIMB 10441 / D) (Chromatium vinosum), this protein is CRISPR-associated endoribonuclease Cas2.